The following is a 300-amino-acid chain: Mycothiol acetyltransferase (300 aa).

N-acetyltransferase domains lie at 4–140 and 151–300; these read IDWR…RPLT and VRLA…AVAD. Asp-36 serves as a coordination point for 1D-myo-inositol 2-(L-cysteinylamino)-2-deoxy-alpha-D-glucopyranoside. Residue 79 to 81 participates in acetyl-CoA binding; the sequence is LVV. 3 residues coordinate 1D-myo-inositol 2-(L-cysteinylamino)-2-deoxy-alpha-D-glucopyranoside: Glu-178, Lys-219, and Glu-227. Residue 231–233 participates in acetyl-CoA binding; sequence VGV. Tyr-269 lines the 1D-myo-inositol 2-(L-cysteinylamino)-2-deoxy-alpha-D-glucopyranoside pocket. Position 274–279 (274–279) interacts with acetyl-CoA; the sequence is NGAAVK.

This sequence belongs to the acetyltransferase family. MshD subfamily. As to quaternary structure, monomer.

The catalysed reaction is 1D-myo-inositol 2-(L-cysteinylamino)-2-deoxy-alpha-D-glucopyranoside + acetyl-CoA = mycothiol + CoA + H(+). In terms of biological role, catalyzes the transfer of acetyl from acetyl-CoA to desacetylmycothiol (Cys-GlcN-Ins) to form mycothiol. The chain is Mycothiol acetyltransferase from Mycobacterium sp. (strain MCS).